The chain runs to 128 residues: Flagellar hook-basal body complex protein FliE (128 aa).

Residues 1–60 (MRPVASFRPPPTFSALQGGASSQATKTAGIDQRGTNQAFSLLDPQSTQSNSTDSSFGEMG) form a disordered region. The segment covering 33 to 55 (RGTNQAFSLLDPQSTQSNSTDSS) has biased composition (polar residues).

It belongs to the FliE family.

It is found in the bacterial flagellum basal body. The chain is Flagellar hook-basal body complex protein FliE from Rhodopirellula baltica (strain DSM 10527 / NCIMB 13988 / SH1).